The following is a 259-amino-acid chain: Glutamate racemase (259 aa).

Substrate-binding positions include 7-8 (DS) and 39-40 (YG). Residue cysteine 70 is the Proton donor/acceptor of the active site. A substrate-binding site is contributed by 71–72 (NT). The active-site Proton donor/acceptor is the cysteine 180. Residue 181–182 (TH) participates in substrate binding.

This sequence belongs to the aspartate/glutamate racemases family.

It catalyses the reaction L-glutamate = D-glutamate. The protein operates within cell wall biogenesis; peptidoglycan biosynthesis. Its function is as follows. Provides the (R)-glutamate required for cell wall biosynthesis. This is Glutamate racemase from Persephonella marina (strain DSM 14350 / EX-H1).